The following is a 316-amino-acid chain: GTP cyclohydrolase FolE2 1 (316 aa).

This sequence belongs to the GTP cyclohydrolase IV family.

The catalysed reaction is GTP + H2O = 7,8-dihydroneopterin 3'-triphosphate + formate + H(+). It participates in cofactor biosynthesis; 7,8-dihydroneopterin triphosphate biosynthesis; 7,8-dihydroneopterin triphosphate from GTP: step 1/1. Its function is as follows. Converts GTP to 7,8-dihydroneopterin triphosphate. The chain is GTP cyclohydrolase FolE2 1 from Burkholderia orbicola (strain AU 1054).